The chain runs to 238 residues: Serine protease SplA (238 aa).

Positions M1 to A38 are cleaved as a signal peptide. Active-site charge relay system residues include H77, D116, and S192.

This sequence belongs to the peptidase S1B family.

It localises to the secreted. The sequence is that of Serine protease SplA (splA) from Staphylococcus aureus (strain COL).